Here is a 179-residue protein sequence, read N- to C-terminus: Putative FBD-associated F-box protein At3g12840 (179 aa).

Residues 14–60 (AARINDLPDDLLATVLSFVPTKDAVATSILSKRWRPIWKRAVNLESD) enclose the F-box domain. The FBD domain occupies 101–152 (KWKQPDFVPLSLYRSLEAFEWIGFKGREKTEKKAAFHILRNACNLKTMAITT).

The sequence is that of Putative FBD-associated F-box protein At3g12840 from Arabidopsis thaliana (Mouse-ear cress).